The following is a 54-amino-acid chain: Ribulose bisphosphate carboxylase large chain (54 aa).

Positions 1 to 2 (MS) are excised as a propeptide. Pro-3 carries the N-acetylproline modification. At Lys-14 the chain carries N6,N6,N6-trimethyllysine.

The protein belongs to the RuBisCO large chain family. Type I subfamily. As to quaternary structure, heterohexadecamer of 8 large chains and 8 small chains.

The protein localises to the plastid. It localises to the chloroplast. It carries out the reaction 2 (2R)-3-phosphoglycerate + 2 H(+) = D-ribulose 1,5-bisphosphate + CO2 + H2O. The enzyme catalyses D-ribulose 1,5-bisphosphate + O2 = 2-phosphoglycolate + (2R)-3-phosphoglycerate + 2 H(+). RuBisCO catalyzes two reactions: the carboxylation of D-ribulose 1,5-bisphosphate, the primary event in carbon dioxide fixation, as well as the oxidative fragmentation of the pentose substrate in the photorespiration process. Both reactions occur simultaneously and in competition at the same active site. In Ilex ciliospinosa (Sichuan holly), this protein is Ribulose bisphosphate carboxylase large chain (rbcL).